A 568-amino-acid polypeptide reads, in one-letter code: Chaperonin homolog Hsp-60, mitochondrial (568 aa).

This sequence belongs to the chaperonin (HSP60) family.

It localises to the mitochondrion matrix. In terms of biological role, implicated in mitochondrial protein import and macromolecular assembly. May facilitate the correct folding of imported proteins. May also prevent misfolding and promote the refolding and proper assembly of unfolded polypeptides generated under stress conditions in the mitochondrial matrix. The chain is Chaperonin homolog Hsp-60, mitochondrial (hsp-60) from Caenorhabditis elegans.